Consider the following 209-residue polypeptide: Large ribosomal subunit protein uL4 (209 aa).

Positions 50–78 (STLKKGEVSGGGKKPYQQKHTGRARQGSI) are disordered.

It belongs to the universal ribosomal protein uL4 family. Part of the 50S ribosomal subunit.

In terms of biological role, one of the primary rRNA binding proteins, this protein initially binds near the 5'-end of the 23S rRNA. It is important during the early stages of 50S assembly. It makes multiple contacts with different domains of the 23S rRNA in the assembled 50S subunit and ribosome. Its function is as follows. Forms part of the polypeptide exit tunnel. The chain is Large ribosomal subunit protein uL4 from Mycoplasmoides gallisepticum (strain R(low / passage 15 / clone 2)) (Mycoplasma gallisepticum).